The following is a 574-amino-acid chain: Serine/arginine repetitive matrix protein 4 (574 aa).

Disordered stretches follow at residues 45-217, 257-291, 366-422, 454-508, and 526-574; these read LETP…HGGD, IVQNSESSDGKRRADYDSGNDTSSPPSSKTGITRS, DLIS…SYSL, YCSS…VSSR, and RSRS…RARR. Residues 51 to 72 show a composition bias toward basic and acidic residues; the sequence is PKDDEEKVKAKDLVTKTHEKNG. 3 stretches are compositionally biased toward basic residues: residues 73-88, 102-120, and 128-184; these read HIKRRGRKRHSHRRAR, PKTKKKKKKSQRKRRRHRS, and VRKK…HRKA. Positions 194–217 are enriched in basic and acidic residues; the sequence is NRSEDCEKSGFRDGGRSSDVHGGD. The span at 275–289 shows a compositional bias: polar residues; it reads GNDTSSPPSSKTGIT. The span at 366 to 385 shows a compositional bias: basic and acidic residues; sequence DLISDRNRSPSHDRYEDGTR. The segment covering 405-422 has biased composition (low complexity); it reads RSLSSGRRSYSRSSSYSL. A compositionally biased stretch (basic residues) spans 454 to 477; it reads YCSSCKSRKHSRRRPSSPMRKRRR. Over residues 478–487 the composition is skewed to basic and acidic residues; that stretch reads DSPSHLEARR. Over residues 496-508 the composition is skewed to low complexity; sequence IPYYRPSPSVSSR. Residues 526–539 show a composition bias toward basic residues; sequence RSRSCSRSRSRSHS. Low complexity predominate over residues 540–559; that stretch reads HTYSSYRSYSRSSSWNSLYS. Over residues 560–574 the composition is skewed to basic residues; it reads RRSRSRSRSYSRARR.

It belongs to the nSR100 family.

It localises to the nucleus. Its function is as follows. Splicing factor specifically required for neural cell differentiation. Acts in conjunction with nPTB/PTBP2 by binding directly to its regulated target transcripts and promotes neural-specific exon inclusion in many genes that function in neural cell differentiation. Required to promote the inclusion of neural-specific exon 10 in nPTB/PTBP2, leading to increased expression of neural-specific nPTB/PTBP2. This Danio rerio (Zebrafish) protein is Serine/arginine repetitive matrix protein 4 (srrm4).